A 2843-amino-acid chain; its full sequence is Adenomatous polyposis coli protein (2843 aa).

N-acetylalanine is present on Ala2. The stretch at 2–61 (AAASYDQLLKQVEALKMENSNLRQELEDNSNHLTKLETEASNMKEVLKQLQGSIEDEAMA) forms a coiled coil. 2 positions are modified to phosphoserine: Ser107 and Ser111. A coiled-coil region spans residues 127 to 248 (SRESTGYLEE…ATEAERSSQN (122 aa)). Positions 239 to 305 (ATEAERSSQN…STHSAPRRLT (67 aa)) are disordered. Residues 241 to 261 (EAERSSQNKHETGSHDAERQN) show a composition bias toward basic and acidic residues. The span at 271–282 (MATSGNGQGSTT) shows a compositional bias: polar residues. Residues 290 to 299 (SVLSSSSTHS) show a composition bias toward low complexity. 7 ARM repeats span residues 453–495 (LMKL…HYSI), 505–547 (LTNL…IASV), 548–591 (LRNL…VLSA), 592–638 (LWNL…GGGI), 639–683 (LRNV…ACGT), 684–725 (LWNL…SAAA), and 726–767 (LRNL…LDAQ). Residues Ser744, Ser748, and Ser780 each carry the phosphoserine modification. The interval 828–878 (TTVLPSSSSSRGSLDSSRSEKDRSLERERGIGLGNYHPATENPGTSSKRGL) is disordered. A compositionally biased stretch (low complexity) spans 833–843 (SSSSSRGSLDS). Basic and acidic residues predominate over residues 844–857 (SRSEKDRSLERERG). A compositionally biased stretch (polar residues) spans 869-878 (NPGTSSKRGL). Ser908 carries the post-translational modification Phosphoserine. 2 disordered regions span residues 923-943 (RRSS…SENS) and 958-987 (RSSN…ESYS). Over residues 927–943 (AAHTHSNTYNFTKSENS) the composition is skewed to polar residues. The responsible for down-regulation through a process mediated by direct ubiquitination stretch occupies residues 960-1337 (SNDSLNSVSS…QHPRTKSSRL (378 aa)). A compositionally biased stretch (low complexity) spans 961-971 (NDSLNSVSSSD). Residues Ser987, Ser1038, and Ser1042 each carry the phosphoserine modification. The segment at 1020-1169 (ELDTPINYSL…TNYSIKYNEE (150 aa)) is interaction with catenins. Disordered stretches follow at residues 1099–1169 (VSPY…YNEE), 1190–1244 (SQKQ…GQPQ), and 1311–1376 (IGTR…PEHY). Residues 1107-1130 (ANGSETNRVGSNHGINQNVSQSLC) are compositionally biased toward polar residues. Residues 1146–1159 (RYSEEEQHEEEERP) show a composition bias toward basic and acidic residues. Positions 1190-1224 (SQKQSFSFSKSSSGQSSKTEHMSSSSENTSTPSSN) are enriched in low complexity. The span at 1225–1244 (AKRQNQLHPSSAQSRSGQPQ) shows a compositional bias: polar residues. Composition is skewed to low complexity over residues 1335 to 1345 (SRLQGSSLSSE) and 1355 to 1366 (SSGAKSPSKSGA). 5 positions are modified to phosphoserine: Ser1360, Ser1371, Ser1385, Ser1392, and Ser1395. Disordered regions lie at residues 1403–1475 (SSVQ…VNAA), 1526–1569 (PPVQ…DSDD), 1583–1611 (MPTK…KPSQ), 1664–1717 (SPPN…DDNK), and 1729–1836 (NSAM…RVRG). The residue at position 1438 (Thr1438) is a Phosphothreonine. 2 stretches are compositionally biased toward basic and acidic residues: residues 1448 to 1466 (TKRE…RESG) and 1540 to 1564 (EQPK…KDLL). Residue Ser1567 is modified to Phosphoserine. The segment covering 1683–1698 (EFEKRDTIPTEGRSTD) has biased composition (basic and acidic residues). The segment covering 1735-1744 (GKSHKPFRVK) has biased composition (basic residues). Ser1774 is modified (phosphoserine). Basic and acidic residues-rich tracts occupy residues 1785-1794 (YRTRVRKNAD) and 1804-1813 (VFSDNKDSKK). Residues Ser1861, Ser1863, and Ser1864 each carry the phosphoserine modification. Residues 1866 to 1893 (DFDDDDVDLSREKAELRKAKENKESEAK) are highly charged. Basic and acidic residues predominate over residues 1881 to 1896 (LRKAKENKESEAKVTS). Disordered regions lie at residues 1881 to 1950 (LRKA…TDEK), 1965 to 2011 (HNSS…APKS), and 2043 to 2072 (ISSA…GGIL). Polar residues-rich tracts occupy residues 1897-1913 (HTEL…TQAI) and 1928-1938 (QKQSTFPQSSK). The span at 1939 to 1950 (DIPDRGAATDEK) shows a compositional bias: basic and acidic residues. Phosphoserine is present on residues Ser1971 and Ser1973. A compositionally biased stretch (basic and acidic residues) spans 1979-1991 (NNNKENEPIKETE). The tract at residues 2035–2059 (EDDLLQECISSAMPKKKKPSRLKGD) is interaction with AXIN1. 6 positions are modified to phosphoserine: Ser2088, Ser2093, Ser2125, Ser2129, Ser2130, and Ser2132. Disordered regions lie at residues 2147 to 2635 (PFHL…SGAT) and 2667 to 2714 (NNPR…VPMR). Thr2151 is modified (phosphothreonine). The segment at 2167 to 2674 (ILKPGEKSTL…PINNPRSGRS (508 aa)) is basic region. The segment covering 2169-2187 (KPGEKSTLETKKIESESKG) has biased composition (basic and acidic residues). 2 stretches are compositionally biased toward polar residues: residues 2203–2223 (VRSN…NMPS) and 2257–2271 (ASKS…TTSP). Phosphoserine is present on residues Ser2260, Ser2270, and Ser2283. The span at 2286–2331 (ARQTSQIGGSSKAPSRSGSRDSTPSRPAQQPLSRPIQSPGRNSISP) shows a compositional bias: polar residues. The span at 2348 to 2369 (TSSPSTASTKSSGSGKMSYTSP) shows a compositional bias: low complexity. 2 stretches are compositionally biased toward polar residues: residues 2370–2409 (GRQM…NGNG) and 2418–2427 (RMSSTKSSGS). A compositionally biased stretch (low complexity) spans 2459–2477 (SASFESLSPSSRPASPTRS). Residues Ser2473 and Ser2535 each carry the phosphoserine modification. Residues 2475–2843 (TRSQAQTPVL…HSGSYLVTSV (369 aa)) are interaction with DLG1. Over residues 2518-2535 (NDGRPAKRHDIARSHSES) the composition is skewed to basic and acidic residues. The segment covering 2555–2568 (SSSLPRVSTWRRTG) has biased composition (polar residues). Ser2569 is subject to Phosphoserine. Residues 2569–2579 (SSSSILSASSE) show a composition bias toward low complexity. Positions 2580 to 2592 (SSEKAKSEDEKHV) are enriched in basic and acidic residues. Composition is skewed to polar residues over residues 2593-2608 (NSIS…QVSA), 2620-2635 (FSPT…SGAT), and 2668-2679 (NPRSGRSPTGNT). 2 positions are modified to phosphoserine: Ser2671 and Ser2674. An interaction with MAPRE1 region spans residues 2674–2843 (SPTGNTPPVI…HSGSYLVTSV (170 aa)). Thr2679 is subject to Phosphothreonine. Phosphoserine occurs at positions 2710 and 2724. Residues 2729–2843 (DAPDQKGTEI…HSGSYLVTSV (115 aa)) form a disordered region. The span at 2741–2757 (GQNNPVPVSETNESSIV) shows a compositional bias: polar residues. Low complexity predominate over residues 2763-2774 (SSSSSSKHSSPS). Residues 2784–2812 (FNYNPSPRKSSADSTSARPSQIPTPVNNN) are compositionally biased toward polar residues. The residue at position 2789 (Ser2789) is a Phosphoserine. Positions 2803 to 2806 (SQIP) match the Microtubule tip localization signal motif. The short motif at 2841–2843 (TSV) is the PDZ-binding element.

Belongs to the adenomatous polyposis coli (APC) family. As to quaternary structure, forms homooligomers. Found in a complex consisting of ARHGEF4, APC and CTNNB1. Found in a complex composed of MACF1, APC, AXIN1, CTNNB1 and GSK3B. The complex composed, at least, of APC, CTNNB1 and GSK3B interacts with JPT1; the interaction requires the inactive form of GSK3B (phosphorylated at 'Ser-9'). Interacts with APC2. Interacts with DLG1 (via PDZ domains) and DLG3 (via PDZ domains). Interacts with alpha- and beta-catenins. Interacts with AXIN1 (via RGS domain). Interacts with ARHGEF4 (via N-terminus). Interacts (via C-terminal residues 2674-2843) with MAPRE1 (via C-terminal residues 206-211); the interaction inhibits association with and bundling of F-actin. Interacts with MAPRE2 and MAPRE3 (via C-terminus). Interacts with DIAPH1; DIAPH1 acts as a scaffold protein for MAPRE1 and APC to stabilize microtubules and promote cell migration. Interacts with DIAPH2. Interacts with SCRIB; may mediate APC targeting to adherens junctions of epithelial cells. Interacts with SPATA13 (via N-terminus and SH3 domain). Interacts with ASAP1 (via SH3 domain). Interacts (at the cell membrane) with AMER1 and AMER2 (via ARM repeats). Interacts with KHDRBS1. Interacts with actin; binds both to F-actin and actin filament bundles. Post-translationally, phosphorylated; phosphorylation enhances the F-actin bundling activity. Phosphorylated by GSK3B. In terms of processing, ubiquitinated, leading to its degradation by the proteasome. Ubiquitination is facilitated by Axin. Deubiquitinated by ZRANB1/TRABID. Expressed in a variety of tissues: brain, small intestine, colon, thymus, skeletal muscle, heart, prostate, lung, spleen, ovary, testis kidney, placenta, blood and liver. Isoform 1A: Very strongly expressed in brain but has relatively low expression levels in other tissues. Isoform 1B: Predominant form in all tissues except for brain, including gastric mucosa and blood.

The protein localises to the cell junction. Its subcellular location is the adherens junction. It localises to the cytoplasm. It is found in the cytoskeleton. The protein resides in the cell projection. The protein localises to the lamellipodium. Its subcellular location is the ruffle membrane. It localises to the cell membrane. Its function is as follows. Tumor suppressor. Promotes rapid degradation of CTNNB1 and participates in Wnt signaling as a negative regulator. APC activity is correlated with its phosphorylation state. Activates the GEF activity of SPATA13 and ARHGEF4. Plays a role in hepatocyte growth factor (HGF)-induced cell migration. Required for MMP9 up-regulation via the JNK signaling pathway in colorectal tumor cells. Associates with both microtubules and actin filaments, components of the cytoskeleton. Plays a role in mediating the organization of F-actin into ordered bundles. Functions downstream of Rho GTPases and DIAPH1 to selectively stabilize microtubules. Acts as a mediator of ERBB2-dependent stabilization of microtubules at the cell cortex. It is required for the localization of MACF1 to the cell membrane and this localization of MACF1 is critical for its function in microtubule stabilization. This is Adenomatous polyposis coli protein from Homo sapiens (Human).